Here is a 453-residue protein sequence, read N- to C-terminus: tRNA modification GTPase MnmE (453 aa).

Arg-22, Glu-79, and Lys-119 together coordinate (6S)-5-formyl-5,6,7,8-tetrahydrofolate. A TrmE-type G domain is found at 215 to 376 (GMKVVIAGRP…LRNHLKECMG (162 aa)). Asn-225 provides a ligand contact to K(+). GTP contacts are provided by residues 225 to 230 (NAGKSS), 244 to 250 (TDIAGTT), 269 to 272 (DTAG), and 334 to 337 (NKAD). Ser-229 provides a ligand contact to Mg(2+). The K(+) site is built by Thr-244, Ile-246, and Thr-249. Residue Thr-250 coordinates Mg(2+). Residue Lys-453 coordinates (6S)-5-formyl-5,6,7,8-tetrahydrofolate.

Belongs to the TRAFAC class TrmE-Era-EngA-EngB-Septin-like GTPase superfamily. TrmE GTPase family. In terms of assembly, homodimer. Heterotetramer of two MnmE and two MnmG subunits. K(+) is required as a cofactor.

The protein resides in the cytoplasm. Functionally, exhibits a very high intrinsic GTPase hydrolysis rate. Involved in the addition of a carboxymethylaminomethyl (cmnm) group at the wobble position (U34) of certain tRNAs, forming tRNA-cmnm(5)s(2)U34. In Vibrio vulnificus (strain CMCP6), this protein is tRNA modification GTPase MnmE.